Reading from the N-terminus, the 430-residue chain is Ribosomal protein uS12 methylthiotransferase RimO (430 aa).

An MTTase N-terminal domain is found at 1–116; that stretch reads MRVGIKVLGC…IANAIENGTD (116 aa). [4Fe-4S] cluster is bound by residues cysteine 10, cysteine 46, cysteine 79, cysteine 148, cysteine 152, and cysteine 155. Residues 134–365 enclose the Radical SAM core domain; that stretch reads LEERPYAYVK…LLQAEISNSR (232 aa). The 64-residue stretch at 367–430 folds into the TRAM domain; it reads DRFVGKKLKF…DEYDMWGSVI (64 aa).

The protein belongs to the methylthiotransferase family. RimO subfamily. In terms of assembly, monomer. [4Fe-4S] cluster serves as cofactor.

Its subcellular location is the cytoplasm. The catalysed reaction is L-aspartate(89)-[ribosomal protein uS12]-hydrogen + (sulfur carrier)-SH + AH2 + 2 S-adenosyl-L-methionine = 3-methylsulfanyl-L-aspartate(89)-[ribosomal protein uS12]-hydrogen + (sulfur carrier)-H + 5'-deoxyadenosine + L-methionine + A + S-adenosyl-L-homocysteine + 2 H(+). Functionally, catalyzes the methylthiolation of an aspartic acid residue of ribosomal protein uS12. In Thermotoga maritima (strain ATCC 43589 / DSM 3109 / JCM 10099 / NBRC 100826 / MSB8), this protein is Ribosomal protein uS12 methylthiotransferase RimO.